We begin with the raw amino-acid sequence, 341 residues long: DnaJ homolog subfamily C member 22 (341 aa).

Residues 3–50 (KGLLVTYALWAVGGPAGLHHLYLGRDSHALLWMLTLGGGGLGWLWEFW) enclose the TM2 domain. 7 helical membrane passes run 5-25 (LLVT…HLYL), 30-50 (HALL…WEFW), 81-101 (FAAQ…SLSS), 105-125 (FYIV…AAVG), 135-155 (LGAA…ILPI), 185-205 (LGLA…CNTA), and 218-238 (FLNW…VLLL). In terms of domain architecture, J spans 277-341 (LAYQVLGLSE…QPRKPRGSRR (65 aa)).

The protein resides in the membrane. In terms of biological role, may function as a co-chaperone. The chain is DnaJ homolog subfamily C member 22 (DNAJC22) from Pongo abelii (Sumatran orangutan).